The following is a 410-amino-acid chain: Argininosuccinate synthase (410 aa).

10 to 18 provides a ligand contact to ATP; it reads AYSGGLDTS. The L-citrulline site is built by Tyr-88 and Ser-93. Gly-118 provides a ligand contact to ATP. Thr-120, Asn-124, and Asp-125 together coordinate L-aspartate. Residue Asn-124 participates in L-citrulline binding. Positions 128, 177, 186, 262, and 274 each coordinate L-citrulline.

It belongs to the argininosuccinate synthase family. Type 1 subfamily. Homotetramer.

The protein localises to the cytoplasm. It carries out the reaction L-citrulline + L-aspartate + ATP = 2-(N(omega)-L-arginino)succinate + AMP + diphosphate + H(+). It functions in the pathway amino-acid biosynthesis; L-arginine biosynthesis; L-arginine from L-ornithine and carbamoyl phosphate: step 2/3. This Caldanaerobacter subterraneus subsp. tengcongensis (strain DSM 15242 / JCM 11007 / NBRC 100824 / MB4) (Thermoanaerobacter tengcongensis) protein is Argininosuccinate synthase.